Here is a 185-residue protein sequence, read N- to C-terminus: Large ribosomal subunit protein uL6 (185 aa).

The protein belongs to the universal ribosomal protein uL6 family. Part of the 50S ribosomal subunit.

Its function is as follows. This protein binds to the 23S rRNA, and is important in its secondary structure. It is located near the subunit interface in the base of the L7/L12 stalk, and near the tRNA binding site of the peptidyltransferase center. This chain is Large ribosomal subunit protein uL6, found in Deinococcus deserti (strain DSM 17065 / CIP 109153 / LMG 22923 / VCD115).